The primary structure comprises 404 residues: Cysteine desulfurase IscS (404 aa).

Pyridoxal 5'-phosphate-binding positions include 75-76 (AT), asparagine 155, glutamine 183, and 203-205 (SAH). N6-(pyridoxal phosphate)lysine is present on lysine 206. Threonine 243 provides a ligand contact to pyridoxal 5'-phosphate. The active-site Cysteine persulfide intermediate is cysteine 328. Position 328 (cysteine 328) interacts with [2Fe-2S] cluster.

The protein belongs to the class-V pyridoxal-phosphate-dependent aminotransferase family. NifS/IscS subfamily. As to quaternary structure, homodimer. Forms a heterotetramer with IscU, interacts with other sulfur acceptors. It depends on pyridoxal 5'-phosphate as a cofactor.

The protein resides in the cytoplasm. It carries out the reaction (sulfur carrier)-H + L-cysteine = (sulfur carrier)-SH + L-alanine. The protein operates within cofactor biosynthesis; iron-sulfur cluster biosynthesis. In terms of biological role, master enzyme that delivers sulfur to a number of partners involved in Fe-S cluster assembly, tRNA modification or cofactor biosynthesis. Catalyzes the removal of elemental sulfur atoms from cysteine to produce alanine. Functions as a sulfur delivery protein for Fe-S cluster synthesis onto IscU, an Fe-S scaffold assembly protein, as well as other S acceptor proteins. The chain is Cysteine desulfurase IscS from Vibrio atlanticus (strain LGP32) (Vibrio splendidus (strain Mel32)).